We begin with the raw amino-acid sequence, 88 residues long: uncharacterized protein (88 aa).

An N-terminal signal peptide occupies residues 1–22 (MGLTLKEHAEVCMALAESSASA).

This is an uncharacterized protein from Haemophilus influenzae (strain ATCC 51907 / DSM 11121 / KW20 / Rd).